The following is a 320-amino-acid chain: MKRIGILTSGGDAAGMNAAVRAIARSAMNAGLEAYGINYGYKGLVEGNIFKMESTKLDEIINRGGTILYSARFPEFAETETQLKGIEQLKKFGIEALVVIGGDGSYHGAEKLTMHGYNSIGVPGTIDNDIPGTDFTIGFDTAANVAMEALDRINDTATSHQRVFVVEVMGRGAGDIALWSGIATGADAIVIPEREYDIEAIANKISENRKNGKDHGLIVLAEGVMGAAEFKEKLDQYGDFDSRAITLGHIQRGGNPTVKDRVLATRLGDYAIRLLLEGKGGLAIGIHDNQLVATDIIDTLENHKHQTDVSLQDLNDRVRF.

Gly11 provides a ligand contact to ATP. Residue 21–25 (RAIAR) coordinates ADP. ATP is bound by residues 72–73 (RF) and 102–105 (GDGS). Residue Asp103 participates in Mg(2+) binding. Residues 125 to 127 (TID), Arg162, and 169 to 171 (MGR) each bind substrate. Asp127 (proton acceptor) is an active-site residue. Residues 185–187 (GAD) and 213–215 (KDH) contribute to the ADP site. Residues Glu222, Arg243, and 249–252 (HIQR) each bind substrate.

The protein belongs to the phosphofructokinase type A (PFKA) family. ATP-dependent PFK group I subfamily. Prokaryotic clade 'B1' sub-subfamily. Homotetramer. The cofactor is Mg(2+).

It is found in the cytoplasm. The catalysed reaction is beta-D-fructose 6-phosphate + ATP = beta-D-fructose 1,6-bisphosphate + ADP + H(+). The protein operates within carbohydrate degradation; glycolysis; D-glyceraldehyde 3-phosphate and glycerone phosphate from D-glucose: step 3/4. Its activity is regulated as follows. Allosterically activated by ADP and other diphosphonucleosides, and allosterically inhibited by phosphoenolpyruvate. In terms of biological role, catalyzes the phosphorylation of D-fructose 6-phosphate to fructose 1,6-bisphosphate by ATP, the first committing step of glycolysis. The polypeptide is ATP-dependent 6-phosphofructokinase (Ligilactobacillus salivarius (strain UCC118) (Lactobacillus salivarius)).